The sequence spans 369 residues: GDSL esterase/lipase At5g42170 (369 aa).

The first 16 residues, 1-16, serve as a signal peptide directing secretion; that stretch reads MSRLVYVIFLLVVVEG. Asparagine 28 and asparagine 45 each carry an N-linked (GlcNAc...) asparagine glycan. The Nucleophile role is filled by serine 57. Asparagine 203 and asparagine 336 each carry an N-linked (GlcNAc...) asparagine glycan. Active-site residues include aspartate 344 and histidine 347.

Belongs to the 'GDSL' lipolytic enzyme family.

The protein resides in the secreted. This is GDSL esterase/lipase At5g42170 from Arabidopsis thaliana (Mouse-ear cress).